Reading from the N-terminus, the 347-residue chain is uncharacterized protein (347 aa).

Positions 1–21 are cleaved as a signal peptide; sequence MRYRIFLLFFFALLPTSLVWA.

This is an uncharacterized protein from Escherichia coli (strain K12).